The primary structure comprises 115 residues: NAD(P)H-quinone oxidoreductase subunit M, organellar chromatophore (115 aa).

The protein belongs to the complex I NdhM subunit family. In terms of assembly, NDH-1 can be composed of about 15 different subunits; different subcomplexes with different compositions have been identified which probably have different functions.

The protein localises to the plastid. It is found in the organellar chromatophore thylakoid membrane. It carries out the reaction a plastoquinone + NADH + (n+1) H(+)(in) = a plastoquinol + NAD(+) + n H(+)(out). The catalysed reaction is a plastoquinone + NADPH + (n+1) H(+)(in) = a plastoquinol + NADP(+) + n H(+)(out). NDH-1 shuttles electrons from an unknown electron donor, via FMN and iron-sulfur (Fe-S) centers, to quinones in the respiratory and/or the photosynthetic chain. The immediate electron acceptor for the enzyme in this species is believed to be plastoquinone. Couples the redox reaction to proton translocation, and thus conserves the redox energy in a proton gradient. The polypeptide is NAD(P)H-quinone oxidoreductase subunit M, organellar chromatophore (Paulinella chromatophora).